The following is a 115-amino-acid chain: Probable non-functional T cell receptor beta variable 7-3 (115 aa).

Residues 1-21 (MGTRLLCWAALCLLGADHTGA) form the signal peptide. The Ig-like domain maps to 22–115 (GVSQTPSNKV…SAAYLRASSL (94 aa)).

As to quaternary structure, most probably, the alpha-beta TR is not assembled due to incorrect folding of the beta chain. Alpha-beta TR is a heterodimer composed of an alpha and beta chain; disulfide-linked. The alpha-beta TR is associated with the transmembrane signaling CD3 coreceptor proteins to form the TR-CD3 (TcR or TCR). The assembly of alpha-beta TR heterodimers with CD3 occurs in the endoplasmic reticulum where a single alpha-beta TR heterodimer associates with one CD3D-CD3E heterodimer, one CD3G-CD3E heterodimer and one CD247 homodimer forming a stable octameric structure. CD3D-CD3E and CD3G-CD3E heterodimers preferentially associate with TR alpha and TR beta chains, respectively. The association of the CD247 homodimer is the last step of TcR assembly in the endoplasmic reticulum and is required for transport to the cell surface.

Its subcellular location is the cell membrane. Probable non-functional open reading frame (ORF) of V region of the variable domain of T cell receptor (TR) beta chain. Non-functional ORF generally cannot participate in the synthesis of a productive T cell receptor (TR) chain due to altered V-(D)-J or switch recombination and/or splicing site (at mRNA level) and/or conserved amino acid change (protein level). Alpha-beta T cell receptors are antigen specific receptors which are essential to the immune response and are present on the cell surface of T lymphocytes. Recognize peptide-major histocompatibility (MH) (pMH) complexes that are displayed by antigen presenting cells (APC), a prerequisite for efficient T cell adaptive immunity against pathogens. Binding of alpha-beta TR to pMH complex initiates TR-CD3 clustering on the cell surface and intracellular activation of LCK that phosphorylates the ITAM motifs of CD3G, CD3D, CD3E and CD247 enabling the recruitment of ZAP70. In turn ZAP70 phosphorylates LAT, which recruits numerous signaling molecules to form the LAT signalosome. The LAT signalosome propagates signal branching to three major signaling pathways, the calcium, the mitogen-activated protein kinase (MAPK) kinase and the nuclear factor NF-kappa-B (NF-kB) pathways, leading to the mobilization of transcription factors that are critical for gene expression and essential for T cell growth and differentiation. The T cell repertoire is generated in the thymus, by V-(D)-J rearrangement. This repertoire is then shaped by intrathymic selection events to generate a peripheral T cell pool of self-MH restricted, non-autoaggressive T cells. Post-thymic interaction of alpha-beta TR with the pMH complexes shapes TR structural and functional avidity. In Homo sapiens (Human), this protein is Probable non-functional T cell receptor beta variable 7-3.